Reading from the N-terminus, the 566-residue chain is Oxygen-dependent choline dehydrogenase (566 aa).

7–36 provides a ligand contact to FAD; it reads DYIICGAGSAGNVLATRLTEDPNVTVLLLE. The disordered stretch occupies residues 180 to 203; the sequence is NGYQQEGFGPMDRTVTPKGRRAST. His-474 functions as the Proton acceptor in the catalytic mechanism.

This sequence belongs to the GMC oxidoreductase family. FAD serves as cofactor.

It catalyses the reaction choline + A = betaine aldehyde + AH2. It carries out the reaction betaine aldehyde + NAD(+) + H2O = glycine betaine + NADH + 2 H(+). The protein operates within amine and polyamine biosynthesis; betaine biosynthesis via choline pathway; betaine aldehyde from choline (cytochrome c reductase route): step 1/1. Involved in the biosynthesis of the osmoprotectant glycine betaine. Catalyzes the oxidation of choline to betaine aldehyde and betaine aldehyde to glycine betaine at the same rate. This chain is Oxygen-dependent choline dehydrogenase, found in Burkholderia ambifaria (strain MC40-6).